A 77-amino-acid chain; its full sequence is Large ribosomal subunit protein bL28 (77 aa).

The tract at residues 1-25 (MARVCQVTGKAPMSGNNVSHANNKT) is disordered.

Belongs to the bacterial ribosomal protein bL28 family.

The protein is Large ribosomal subunit protein bL28 of Paraburkholderia phytofirmans (strain DSM 17436 / LMG 22146 / PsJN) (Burkholderia phytofirmans).